We begin with the raw amino-acid sequence, 717 residues long: Patatin-like phospholipase domain-containing protein AO090003000839 (717 aa).

Residues 87–107 (WPFLFIVFGWITVLGFAYALT) form a helical membrane-spanning segment. Residues 277-468 (LCLSGGATFA…RTDIPIRALN (192 aa)) enclose the PNPLA domain. A GXSXG motif is present at residues 308-312 (GTSGG). The Nucleophile role is filled by Ser310. Asp455 functions as the Proton acceptor in the catalytic mechanism. Positions 620–696 (VSPAQSRRKR…STGNIFQEMR (77 aa)) are disordered. The segment covering 639–658 (MVERLDHNLPDRQPDNKEDL) has biased composition (basic and acidic residues). The span at 660–673 (DSSGIDSNVSSRDS) shows a compositional bias: low complexity.

The protein belongs to the PLPL family.

It localises to the membrane. Functionally, probable lipid hydrolase. The protein is Patatin-like phospholipase domain-containing protein AO090003000839 of Aspergillus oryzae (strain ATCC 42149 / RIB 40) (Yellow koji mold).